The primary structure comprises 580 residues: Probable mediator of RNA polymerase II transcription subunit 26a (580 aa).

One can recognise a TFIIS N-terminal domain in the interval 108–183; that stretch reads DEVMRIRDIL…AEWKRLVDQW (76 aa). 3 stretches are compositionally biased toward basic and acidic residues: residues 244 to 255, 280 to 290, and 299 to 309; these read RHSVESKHERKS, QTRREEADVRP, and VEPKRQTKQSR. The tract at residues 244–337 is disordered; the sequence is RHSVESKHER…RKLAGPQQDK (94 aa). Positions 347-368 form a coiled coil; sequence FEFAKRKLQESYHQHENAKRQR.

Belongs to the Mediator complex subunit 26 family. As to quaternary structure, component of the Mediator complex.

It is found in the nucleus. Its function is as follows. Component of the Mediator complex, a coactivator involved in the regulated transcription of nearly all RNA polymerase II-dependent genes. Mediator functions as a bridge to convey information from gene-specific regulatory proteins to the basal RNA polymerase II transcription machinery. The Mediator complex, having a compact conformation in its free form, is recruited to promoters by direct interactions with regulatory proteins and serves for the assembly of a functional preinitiation complex with RNA polymerase II and the general transcription factors. May play a role in transcription elongation. The chain is Probable mediator of RNA polymerase II transcription subunit 26a (MED26A) from Arabidopsis thaliana (Mouse-ear cress).